The chain runs to 152 residues: Large ribosomal subunit protein uL15 (152 aa).

Residues Met1–Met57 are disordered. The span at Ser14–Arg23 shows a compositional bias: basic residues. A compositionally biased stretch (gly residues) spans Ile25–Met37.

It belongs to the universal ribosomal protein uL15 family. As to quaternary structure, part of the 50S ribosomal subunit.

Binds to the 23S rRNA. The protein is Large ribosomal subunit protein uL15 of Prochlorococcus marinus (strain MIT 9312).